The sequence spans 346 residues: Methylthioribose-1-phosphate isomerase (346 aa).

Substrate-binding positions include 50 to 52 (RGA), R93, and Q196. The active-site Proton donor is D237. Position 247–248 (247–248 (NK)) interacts with substrate.

Belongs to the eIF-2B alpha/beta/delta subunits family. MtnA subfamily.

It carries out the reaction 5-(methylsulfanyl)-alpha-D-ribose 1-phosphate = 5-(methylsulfanyl)-D-ribulose 1-phosphate. It participates in amino-acid biosynthesis; L-methionine biosynthesis via salvage pathway; L-methionine from S-methyl-5-thio-alpha-D-ribose 1-phosphate: step 1/6. Functionally, catalyzes the interconversion of methylthioribose-1-phosphate (MTR-1-P) into methylthioribulose-1-phosphate (MTRu-1-P). In Alkalilimnicola ehrlichii (strain ATCC BAA-1101 / DSM 17681 / MLHE-1), this protein is Methylthioribose-1-phosphate isomerase.